The following is a 369-amino-acid chain: Spore membrane assembly protein 2 (369 aa).

The Cytoplasmic portion of the chain corresponds to 1-6; the sequence is MLFPKR. Residues 7–27 traverse the membrane as a helical segment; sequence LIVWGVLLILSLSQFVLYLPA. Residues 28–220 are Lumenal-facing; that stretch reads TTCTNSKGLR…NLAFILMMFN (193 aa). A helical transmembrane segment spans residues 221–241; that stretch reads GMVFYFAVLEIIVGFLSICVV. The Cytoplasmic segment spans residues 242 to 265; it reads SAFGGALSVGKRHRLFPILLKSSS. The helical transmembrane segment at 266 to 286 threads the bilayer; it reads SILVVIATLTILCNIVYLIAL. The Lumenal segment spans residues 287–319; it reads KTLEPEEVTDVGSDNAAVHTTGWELLKVNVGSG. The chain crosses the membrane as a helical span at residues 320 to 340; that stretch reads FIMGLARYAIQWVLLVLAFLA. The Cytoplasmic segment spans residues 341-369; the sequence is ANHYKAKPKKSDKYTEDTSNSPSPDLMEK. The segment at 348 to 369 is disordered; it reads PKKSDKYTEDTSNSPSPDLMEK.

It belongs to the SMA2 family.

The protein localises to the prospore membrane. The protein resides in the endoplasmic reticulum. Functionally, involved in spore and ascus formation. Required for the efficient assembly of the precursors of the prospore membrane to a continuous prospore membrane. The chain is Spore membrane assembly protein 2 (SMA2) from Saccharomyces cerevisiae (strain YJM789) (Baker's yeast).